The following is a 462-amino-acid chain: tRNA(Ile2) 2-agmatinylcytidine synthetase TiaS (462 aa).

The protein belongs to the TiaS family.

It is found in the cytoplasm. It catalyses the reaction cytidine(34) in tRNA(Ile2) + agmatine + ATP + H2O = 2-agmatinylcytidine(34) in tRNA(Ile2) + AMP + 2 phosphate + 2 H(+). Functionally, ATP-dependent agmatine transferase that catalyzes the formation of 2-agmatinylcytidine (agm2C) at the wobble position (C34) of tRNA(Ile2), converting the codon specificity from AUG to AUA. This chain is tRNA(Ile2) 2-agmatinylcytidine synthetase TiaS, found in Haloquadratum walsbyi (strain DSM 16790 / HBSQ001).